Reading from the N-terminus, the 1207-residue chain is MKSLAGHVVKYGKHRERRSFARISEVLELPNLIEIQTDSYQWFLDEGLREMFEDILPIDDFQGNLSLEFVDYELKEPKYTVEEARAHDANYSAPLHVTLRLTNRETGEIKSQEVFFGDFPLMTEMGTFIINGAERVIVSQLVRSPGVYFHGKVDKNGKEGFGSTVIPNRGAWLEMETDAKDISYVRIDRTRKIPLTVLVRALGFGSDDTIFEIFGDSESLRNTIEKDLHKNASDSRTEEGLKDIYERLRPGEPKTADSSRSLLTARFFDPKRYDLANVGRYKVNKKLDLKTRLLNLTLAETLVDPETGEIIVEKGTVLTHQIMETLGEYIDNGLNSVTYYPSEDAVVTEPMTIQVIQVLSPKDPERIVNVIGNGYPDDSVKTVRPADIVASMSYFFNLMEDIGNVDDIDHLGNRRIRSVGELLQNQFRIGLARMERVVRERMSIQDTETLTPQQLINIRPVVASIKEFFGSSQLSQFMDQTNPLGELTHKRRLSALGPGGLTRDRAGYEVRDVHYSHYGRMCPIETPEGPNIGLINSLSSYAKVNKFGFIETPYRRVDRATGRVTDQVDYLTADIEDHYIVAQANSLLNEDGTFANDVVMARLQSENLEVAVDKVDYMDVSPKQVVAVATACIPFLENDDSNRALMGANMQRQAVPLIQPRSPWVGTGMEYKSAHDSGAALLCKHDGVVEFVDAKEIRVRRDNGALDKYMVTKFRRSNSGTSYNQRPIVHLGEKVEKGDTLADGPSMEEGEMALGQNVLVAFMTWEGYNYEDAIIMSRRLVKDDVYTSVHIEEYESEARDTKLGPEEITREIPNVGEDALKDLDEMGIIRIGAEVQDGDLLVGKVTPKGVTELSAEERLLHAIFGEKAREVRDTSLRVPHGGGGIVHDVKIFTREAGDELSPGVNMLVRVYIVQKRKIHEGDKMAGRHGNKGVVSRIMPEEDMPFLPDGTPVDIMLNPLGVPSRMNIGQVLELHLGMAARQLGIHVATPVFDGATDEDVWETVREAGMASDAKTVLYDGRTGEPFDNRISVGVMYMIKLAHMVDDKLHARSIGPYSLVTQQPLGGKAQFGGQRFGEMEVWALEAYGAAYTLQEILTYKSDDVVGRVKTYEAIVKGEPIPKPGVPESFRVLVKELQSLGLDMRVLDIEEAEIELRDMDDDDDDLITVDALTKFAEQQSAKQLEKEAESVVKEEAQDVVQEIETAEDRD.

Belongs to the RNA polymerase beta chain family. In terms of assembly, the RNAP catalytic core consists of 2 alpha, 1 beta, 1 beta' and 1 omega subunit. When a sigma factor is associated with the core the holoenzyme is formed, which can initiate transcription.

The enzyme catalyses RNA(n) + a ribonucleoside 5'-triphosphate = RNA(n+1) + diphosphate. DNA-dependent RNA polymerase catalyzes the transcription of DNA into RNA using the four ribonucleoside triphosphates as substrates. This is DNA-directed RNA polymerase subunit beta from Enterococcus faecalis (strain ATCC 700802 / V583).